The sequence spans 315 residues: Homoserine kinase (315 aa).

97–107 (PPARGLGSSAT) serves as a coordination point for ATP.

It belongs to the GHMP kinase family. Homoserine kinase subfamily.

The protein resides in the cytoplasm. The catalysed reaction is L-homoserine + ATP = O-phospho-L-homoserine + ADP + H(+). It functions in the pathway amino-acid biosynthesis; L-threonine biosynthesis; L-threonine from L-aspartate: step 4/5. In terms of biological role, catalyzes the ATP-dependent phosphorylation of L-homoserine to L-homoserine phosphate. This is Homoserine kinase from Prochlorococcus marinus subsp. pastoris (strain CCMP1986 / NIES-2087 / MED4).